A 303-amino-acid chain; its full sequence is Oxygen-dependent coproporphyrinogen-III oxidase (303 aa).

A substrate-binding site is contributed by serine 93. A divalent metal cation-binding residues include histidine 97 and histidine 107. Histidine 107 functions as the Proton donor in the catalytic mechanism. 109–111 is a substrate binding site; that stretch reads NVR. A divalent metal cation-binding residues include histidine 146 and histidine 176. The tract at residues 241–276 is important for dimerization; the sequence is YVEFNLVYDRGTLFGLQSGGRTESILMSLPPQVRWG. 259 to 261 is a substrate binding site; that stretch reads GGR.

The protein belongs to the aerobic coproporphyrinogen-III oxidase family. In terms of assembly, homodimer. It depends on a divalent metal cation as a cofactor.

The protein localises to the cytoplasm. It catalyses the reaction coproporphyrinogen III + O2 + 2 H(+) = protoporphyrinogen IX + 2 CO2 + 2 H2O. It functions in the pathway porphyrin-containing compound metabolism; protoporphyrin-IX biosynthesis; protoporphyrinogen-IX from coproporphyrinogen-III (O2 route): step 1/1. Involved in the heme biosynthesis. Catalyzes the aerobic oxidative decarboxylation of propionate groups of rings A and B of coproporphyrinogen-III to yield the vinyl groups in protoporphyrinogen-IX. The polypeptide is Oxygen-dependent coproporphyrinogen-III oxidase (Pseudomonas putida (strain ATCC 47054 / DSM 6125 / CFBP 8728 / NCIMB 11950 / KT2440)).